The primary structure comprises 332 residues: Probable xyloglucan endotransglucosylase/hydrolase protein 28 (332 aa).

The N-terminal stretch at M1–A22 is a signal peptide. One can recognise a GH16 domain in the interval L23–F223. E108 functions as the Nucleophile in the catalytic mechanism. E112 (proton donor) is an active-site residue. Xyloglucan-binding positions include E112 and Q125 to N127. N131 carries N-linked (GlcNAc...) asparagine glycosylation. Residues H135–E139, K202–W203, G207, and R282 each bind xyloglucan. C277 and C290 form a disulfide bridge. The segment covering H313 to L326 has biased composition (basic residues). The tract at residues H313–I332 is disordered.

The protein belongs to the glycosyl hydrolase 16 family. XTH group 3 subfamily. Post-translationally, contains at least one intrachain disulfide bond essential for its enzymatic activity. Expressed in 7 day old seedlings, roots, rosette leaves, internodes between nodes bearing axillary shoots, nodes bearing flowers, flower buds and siliques.

The protein resides in the secreted. It is found in the cell wall. Its subcellular location is the extracellular space. The protein localises to the apoplast. It carries out the reaction breaks a beta-(1-&gt;4) bond in the backbone of a xyloglucan and transfers the xyloglucanyl segment on to O-4 of the non-reducing terminal glucose residue of an acceptor, which can be a xyloglucan or an oligosaccharide of xyloglucan.. Its function is as follows. Catalyzes xyloglucan endohydrolysis (XEH) and/or endotransglycosylation (XET). Cleaves and religates xyloglucan polymers, an essential constituent of the primary cell wall, and thereby participates in cell wall construction of growing tissues. The sequence is that of Probable xyloglucan endotransglucosylase/hydrolase protein 28 (XTH28) from Arabidopsis thaliana (Mouse-ear cress).